Here is a 396-residue protein sequence, read N- to C-terminus: Exodeoxyribonuclease 7 large subunit (396 aa).

The protein belongs to the XseA family. As to quaternary structure, heterooligomer composed of large and small subunits.

It localises to the cytoplasm. It carries out the reaction Exonucleolytic cleavage in either 5'- to 3'- or 3'- to 5'-direction to yield nucleoside 5'-phosphates.. Its function is as follows. Bidirectionally degrades single-stranded DNA into large acid-insoluble oligonucleotides, which are then degraded further into small acid-soluble oligonucleotides. In Clostridium tetani (strain Massachusetts / E88), this protein is Exodeoxyribonuclease 7 large subunit.